The sequence spans 132 residues: Small ribosomal subunit protein uS8 (132 aa).

It belongs to the universal ribosomal protein uS8 family. In terms of assembly, part of the 30S ribosomal subunit. Contacts proteins S5 and S12.

One of the primary rRNA binding proteins, it binds directly to 16S rRNA central domain where it helps coordinate assembly of the platform of the 30S subunit. In Exiguobacterium sp. (strain ATCC BAA-1283 / AT1b), this protein is Small ribosomal subunit protein uS8.